Consider the following 347-residue polypeptide: tRNA N6-adenosine threonylcarbamoyltransferase (347 aa).

Residues histidine 115 and histidine 119 each contribute to the Fe cation site. Substrate contacts are provided by residues 138–142, aspartate 171, glycine 184, and asparagine 277; that span reads LVSGG. Aspartate 305 contributes to the Fe cation binding site.

The protein belongs to the KAE1 / TsaD family. It depends on Fe(2+) as a cofactor.

Its subcellular location is the cytoplasm. The catalysed reaction is L-threonylcarbamoyladenylate + adenosine(37) in tRNA = N(6)-L-threonylcarbamoyladenosine(37) in tRNA + AMP + H(+). Functionally, required for the formation of a threonylcarbamoyl group on adenosine at position 37 (t(6)A37) in tRNAs that read codons beginning with adenine. Is involved in the transfer of the threonylcarbamoyl moiety of threonylcarbamoyl-AMP (TC-AMP) to the N6 group of A37, together with TsaE and TsaB. TsaD likely plays a direct catalytic role in this reaction. The polypeptide is tRNA N6-adenosine threonylcarbamoyltransferase (Polaromonas sp. (strain JS666 / ATCC BAA-500)).